A 163-amino-acid chain; its full sequence is Keratin-associated protein 11-1 (163 aa).

A run of 4 repeats spans residues 111–120, 121–130, 131–140, and 141–150. The 4 X 10 AA approximate repeats stretch occupies residues 111-150; sequence CQPLGGISSVCQPVGGISTVCQPVGGVSTVCQPACGVSRT.

Belongs to the PMG family. Expressed in the upper matrix and in the entire hair cortex.

In the hair cortex, hair keratin intermediate filaments are embedded in an interfilamentous matrix, consisting of hair keratin-associated proteins (KRTAP), which are essential for the formation of a rigid and resistant hair shaft through their extensive disulfide bond cross-linking with abundant cysteine residues of hair keratins. The matrix proteins include the high-sulfur and high-glycine-tyrosine keratins. The protein is Keratin-associated protein 11-1 (KRTAP11-1) of Homo sapiens (Human).